We begin with the raw amino-acid sequence, 1172 residues long: DNA-directed RNA polymerase subunit beta (1172 aa).

The protein belongs to the RNA polymerase beta chain family. The RNAP catalytic core consists of 2 alpha, 1 beta, 1 beta' and 1 omega subunit. When a sigma factor is associated with the core the holoenzyme is formed, which can initiate transcription.

The enzyme catalyses RNA(n) + a ribonucleoside 5'-triphosphate = RNA(n+1) + diphosphate. Its function is as follows. DNA-dependent RNA polymerase catalyzes the transcription of DNA into RNA using the four ribonucleoside triphosphates as substrates. In Thermosipho melanesiensis (strain DSM 12029 / CIP 104789 / BI429), this protein is DNA-directed RNA polymerase subunit beta.